The chain runs to 861 residues: ToMV resistant protein Tm-2 netted virescent (861 aa).

Positions 63-83 form a coiled coil; that stretch reads VKNLLKDIQELAGDVEDLLDD. Positions 162-388 constitute an NB-ARC domain; the sequence is DDFNMLQAKL…LESMGHKVQD (227 aa). 185–192 contributes to the ATP binding site; sequence GMPGLGKT. 13 LRR repeats span residues 225–248, 305–327, 388–411, 449–472, 510–536, 585–608, 609–631, 652–680, 689–710, 712–735, 736–758, 784–807, and 810–835; these read LDIA…NLRS, LHAL…IFNF, DGCA…CFLY, LAED…TYNG, VARL…KLEK, MTCL…IVKL, TRLE…VWES, ISSF…FFEP, LRKL…IFSP, LKAL…LSSY, PHIA…SFPP, LRKL…EANG, and FPQL…DVSM.

It belongs to the disease resistance NB-LRR family. As to quaternary structure, (Microbial infection) Interacts with tobamoviruses mouvement protein at the plasma membrane; this interaction triggers defense responses leading to programmed cell death. Binds to HSP90 proteins; this interaction seems required for defense responses toward tobamoviruses.

It is found in the cell membrane. Inhibitor of viral mouvements which confers resistance to some tobamoviruses including tomato mosaic virus (ToMV) (e.g. isolate L and W3) and tobacco mosaic virus (TMV), but not to resistance-breaking isolates (e.g. Ltbl) ToMV and tomato brown rugose fruit virus (ToBRFV). Elicits a hypersensitive reaction in response to avirulent (Avr) movement proteins from resistance inducing tobamoviruses (e.g. ToMV and TMV) strains, thus leading to programmed cell death. The sequence is that of ToMV resistant protein Tm-2 netted virescent from Solanum lycopersicum (Tomato).